The primary structure comprises 116 residues: Large ribosomal subunit protein bL20c (116 aa).

Belongs to the bacterial ribosomal protein bL20 family.

It is found in the plastid. Its subcellular location is the chloroplast. Functionally, binds directly to 23S ribosomal RNA and is necessary for the in vitro assembly process of the 50S ribosomal subunit. It is not involved in the protein synthesizing functions of that subunit. In Rhodomonas salina (Cryptomonas salina), this protein is Large ribosomal subunit protein bL20c.